Reading from the N-terminus, the 182-residue chain is UPF0397 protein SPT_0523 (182 aa).

5 consecutive transmembrane segments (helical) span residues 10 to 30, 46 to 66, 73 to 93, 109 to 129, and 148 to 168; these read VVAV…NIPT, LLSI…GHAI, YGLW…VGLF, ILIF…VLAP, and IVAG…LLLA.

This sequence belongs to the UPF0397 family.

The protein localises to the cell membrane. The polypeptide is UPF0397 protein SPT_0523 (Streptococcus pneumoniae (strain Taiwan19F-14)).